The chain runs to 1228 residues: AT-rich interactive domain-containing protein 4B (1228 aa).

Disordered stretches follow at residues 123 to 167 (LPLT…DDRK) and 266 to 307 (KTEL…PFPE). 3 positions are modified to phosphoserine: Ser276, Ser295, and Ser296. Acidic residues predominate over residues 277–305 (EAEEEEEEEDDEKEKEDNSSEEEEEIEPF). The 93-residue stretch at 306–398 (PEERENFLQQ…YLYGFEEYCR (93 aa)) folds into the ARID domain. Residues Lys428 and Lys461 each participate in a glycyl lysine isopeptide (Lys-Gly) (interchain with G-Cter in SUMO2) cross-link. A compositionally biased stretch (basic and acidic residues) spans 437 to 464 (EVNVEDSKNMIPKEETPAEDESERKENI). 6 disordered regions span residues 437-466 (EVNV…NIKP), 479-525 (PAQS…EQAR), 539-606 (RPAD…SDTG), 620-802 (LQAS…EEKR), 825-1129 (LNNS…RLPK), and 1168-1204 (SEVA…SITA). Ser482 carries the post-translational modification Phosphoserine. Over residues 483–511 (DQEKEANITKLEEKESLEDKDGATARAEE) the composition is skewed to basic and acidic residues. Basic residues predominate over residues 546 to 555 (PKIKHRKKIK). The segment covering 556–569 (NKLDKEKDRDEKYS) has biased composition (basic and acidic residues). Residues Ser579, Ser581, and Ser588 each carry the phosphoserine modification. Residues 596–606 (DLADAKNSDTG) show a composition bias toward basic and acidic residues. Ser630 carries the phosphoserine modification. 2 stretches are compositionally biased toward basic and acidic residues: residues 635-667 (ERCA…KEEL) and 691-700 (SPERLRKDVE). Residue Lys664 forms a Glycyl lysine isopeptide (Lys-Gly) (interchain with G-Cter in SUMO2) linkage. Ser691 and Ser703 each carry phosphoserine. Residues 701–713 (AISEDTDFEEEDE) show a composition bias toward acidic residues. A Phosphothreonine modification is found at Thr706. Over residues 721-730 (VKKDTTDKAL) the composition is skewed to basic and acidic residues. Positions 744 to 753 (IQTNCLQSGS) are enriched in polar residues. Composition is skewed to basic and acidic residues over residues 755 to 765 (GKKEDRTKSKE), 825 to 843 (LNNS…RKDV), and 911 to 926 (KPVE…RKTE). The segment covering 927–937 (FPSSGSNSVLN) has biased composition (polar residues). Ser930 is modified (phosphoserine). At Thr942 the chain carries Phosphothreonine. The span at 944–965 (ESPSSVTVTETSQQQSSVTVSV) shows a compositional bias: low complexity. At Ser945 the chain carries Phosphoserine. Positions 972 to 981 (EEVRSIKSET) are enriched in basic and acidic residues. The segment covering 1003–1017 (SSPAGFNASVSSSSS) has biased composition (low complexity). The span at 1046–1064 (KKQKRSHKATVVNNKKKGK) shows a compositional bias: basic residues. Residue Thr1066 is modified to Phosphothreonine. 4 positions are modified to phosphoserine: Ser1068, Ser1069, Ser1071, and Ser1075. Positions 1112–1124 (KNGDKDPDLKEPS) are enriched in basic and acidic residues. The stretch at 1141-1186 (ENMTSAERISILQEKLQEIRKHYLSLKSEVASIDRRRKRLKKKERE) forms a coiled coil. Residues 1188 to 1204 (AATSSSSSSPSSSSITA) are compositionally biased toward low complexity.

As to quaternary structure, component of a Sin3A corepressor complex consisting of SIN3A, SAP130, SUDS3/SAP45, SAP180, HDAC1 and HDAC2. Interacts with ARID4A. Interacts with AR.

Its subcellular location is the nucleus. Functionally, acts as a transcriptional repressor. May function in the assembly and/or enzymatic activity of the Sin3A corepressor complex or in mediating interactions between the complex and other regulatory complexes. Plays a role in the regulation of epigenetic modifications at the PWS/AS imprinting center near the SNRPN promoter, where it might function as part of a complex with RB1 and ARID4A. Involved in spermatogenesis, together with ARID4A, where it functions as a transcriptional coactivator for AR (androgen receptor) and enhances expression of genes required for sperm maturation. Regulates expression of the tight junction protein CLDN3 in the testis, which is important for integrity of the blood-testis barrier. Plays a role in myeloid homeostasis where it regulates the histone methylation state of bone marrow cells and expression of various genes involved in hematopoiesis. May function as a leukemia suppressor. This is AT-rich interactive domain-containing protein 4B (Arid4b) from Rattus norvegicus (Rat).